We begin with the raw amino-acid sequence, 325 residues long: Polyamine aminopropyltransferase (325 aa).

The PABS domain occupies 11–248 (SSMAEDFAVE…TLWAMAMASD (238 aa)). Gln-44 lines the S-methyl-5'-thioadenosine pocket. Spermidine contacts are provided by His-75 and Asp-99. S-methyl-5'-thioadenosine-binding positions include Glu-119 and 151–152 (DG). Asp-169 (proton acceptor) is an active-site residue. Pro-176 is an S-methyl-5'-thioadenosine binding site.

The protein belongs to the spermidine/spermine synthase family. Homodimer or homotetramer.

The protein localises to the cytoplasm. It carries out the reaction S-adenosyl 3-(methylsulfanyl)propylamine + putrescine = S-methyl-5'-thioadenosine + spermidine + H(+). Its pathway is amine and polyamine biosynthesis; spermidine biosynthesis; spermidine from putrescine: step 1/1. Its function is as follows. Catalyzes the irreversible transfer of a propylamine group from the amino donor S-adenosylmethioninamine (decarboxy-AdoMet) to putrescine (1,4-diaminobutane) to yield spermidine. In Nitrosomonas europaea (strain ATCC 19718 / CIP 103999 / KCTC 2705 / NBRC 14298), this protein is Polyamine aminopropyltransferase.